A 623-amino-acid polypeptide reads, in one-letter code: Glutathione import ATP-binding protein GsiA (623 aa).

ABC transporter domains are found at residues 15–269 (VSGL…QTLL) and 325–564 (LRSG…RKLM). Residues 49-56 (GESGSGKS) and 357-364 (GESGSGKS) contribute to the ATP site.

Belongs to the ABC transporter superfamily. Glutathione importer (TC 3.A.1.5.11) family. In terms of assembly, the complex is composed of two ATP-binding proteins (GsiA), two transmembrane proteins (GsiC and GsiD) and a solute-binding protein (GsiB).

It is found in the cell inner membrane. The enzyme catalyses glutathione(out) + ATP + H2O = glutathione(in) + ADP + phosphate + H(+). In terms of biological role, part of the ABC transporter complex GsiABCD involved in glutathione import. Responsible for energy coupling to the transport system. The sequence is that of Glutathione import ATP-binding protein GsiA from Salmonella paratyphi A (strain ATCC 9150 / SARB42).